Here is a 164-residue protein sequence, read N- to C-terminus: Diphosphoinositol polyphosphate phosphohydrolase 3-alpha (164 aa).

Substrate is bound by residues arginine 9, lysine 17–arginine 19, and serine 38–arginine 40. The Nudix hydrolase domain maps to lysine 17–lysine 144. Mg(2+)-binding residues include glycine 49 and glutamate 65. The short motif at glycine 50–glycine 71 is the Nudix box element. Glutamate 68 functions as the Proton acceptor in the catalytic mechanism. Glutamate 69 lines the Mg(2+) pocket. Residues proline 89–histidine 91, arginine 115, and lysine 133 contribute to the substrate site. Residues lysine 144–proline 164 form a disordered region. A compositionally biased stretch (polar residues) spans serine 148 to proline 164.

The protein belongs to the Nudix hydrolase family. DIPP subfamily. It depends on Mg(2+) as a cofactor. The cofactor is Mn(2+). Mainly expressed in testis and, at lower level in brain. According to PubMed:12121577, it is widely expressed.

It localises to the cytoplasm. The catalysed reaction is diphospho-myo-inositol polyphosphate + H2O = myo-inositol polyphosphate + phosphate.. It catalyses the reaction P(1),P(6)-bis(5'-adenosyl) hexaphosphate + H2O = adenosine 5'-pentaphosphate + AMP + 2 H(+). It carries out the reaction P(1),P(5)-bis(5'-adenosyl) pentaphosphate + H2O = adenosine 5'-tetraphosphate + AMP + 2 H(+). Its function is as follows. Cleaves a beta-phosphate from the diphosphate groups in PP-InsP5 (diphosphoinositol pentakisphosphate), suggesting that it may play a role in signal transduction. Also able to catalyze the hydrolysis of dinucleoside oligophosphates, with Ap6A and Ap5A being the preferred substrates. The major reaction products are ADP and p4a from Ap6A and ADP and ATP from Ap5A. Also able to hydrolyze 5-phosphoribose 1-diphosphate. In Homo sapiens (Human), this protein is Diphosphoinositol polyphosphate phosphohydrolase 3-alpha (NUDT10).